Reading from the N-terminus, the 88-residue chain is Small ribosomal subunit protein uS15 (88 aa).

Belongs to the universal ribosomal protein uS15 family. As to quaternary structure, part of the 30S ribosomal subunit. Forms a bridge to the 50S subunit in the 70S ribosome, contacting the 23S rRNA.

Functionally, one of the primary rRNA binding proteins, it binds directly to 16S rRNA where it helps nucleate assembly of the platform of the 30S subunit by binding and bridging several RNA helices of the 16S rRNA. In terms of biological role, forms an intersubunit bridge (bridge B4) with the 23S rRNA of the 50S subunit in the ribosome. The protein is Small ribosomal subunit protein uS15 of Polaromonas naphthalenivorans (strain CJ2).